The following is a 56-amino-acid chain: uncharacterized protein (56 aa).

2 consecutive transmembrane segments (helical) span residues 6–26 (VILL…LLNG) and 29–49 (VDFL…FVVV).

The protein resides in the cell membrane. This is an uncharacterized protein from Bacillus subtilis (strain 168).